Here is a 305-residue protein sequence, read N- to C-terminus: Glycine--tRNA ligase alpha subunit (305 aa).

This sequence belongs to the class-II aminoacyl-tRNA synthetase family. As to quaternary structure, tetramer of two alpha and two beta subunits.

Its subcellular location is the cytoplasm. The catalysed reaction is tRNA(Gly) + glycine + ATP = glycyl-tRNA(Gly) + AMP + diphosphate. This Vibrio vulnificus (strain CMCP6) protein is Glycine--tRNA ligase alpha subunit.